We begin with the raw amino-acid sequence, 308 residues long: MGAQLLTCTVSDSIRHQFSCFATSCCVLWVPKGVSTMLPPSQLGSQPPTSDPLSCQALLPRSLPGFTHMPPLSKFLVGLALRNALEEAGCWADVWALQLQLYRFGGVEATQALIRHLQELQKGGRADWKVSVNALSSALQLLAWEQAGPKRVKRSLSNMGCENEQEQRVHNVVELLPAVGTYYNLGTALYYAIKNCTDKAKERGRDGAIDLGYDLLMTMVGMSGGPTGAVITAALKPALKAGVQRLIRYYHDEEGVTTSQPETRKDAPTYRDDVEETTMSNLVSEVESTTSNWGRPLLKNYVFLAYKR.

Belongs to the apolipoprotein F family.

Its subcellular location is the secreted. In terms of biological role, minor apolipoprotein that associates with LDL. Inhibits cholesteryl ester transfer protein (CETP) activity and appears to be an important regulator of cholesterol transport. Also associates to a lesser degree with VLDL, Apo-AI and Apo-AII. This Rattus norvegicus (Rat) protein is Apolipoprotein F (Apof).